The sequence spans 108 residues: Tetrahydromethanopterin S-methyltransferase subunit B (108 aa).

The chain crosses the membrane as a helical span at residues 79–99; the sequence is GMFFGFWVTMAILVLVTILAV.

This sequence belongs to the MtrB family. The complex is composed of 8 subunits; MtrA, MtrB, MtrC, MtrD, MtrE, MtrF, MtrG and MtrH.

It localises to the cell membrane. It carries out the reaction 5-methyl-5,6,7,8-tetrahydromethanopterin + coenzyme M + 2 Na(+)(in) = 5,6,7,8-tetrahydromethanopterin + methyl-coenzyme M + 2 Na(+)(out). It participates in one-carbon metabolism; methanogenesis from CO(2); methyl-coenzyme M from 5,10-methylene-5,6,7,8-tetrahydromethanopterin: step 2/2. Its function is as follows. Part of a complex that catalyzes the formation of methyl-coenzyme M and tetrahydromethanopterin from coenzyme M and methyl-tetrahydromethanopterin. This is an energy-conserving, sodium-ion translocating step. In Methanococcus maripaludis (strain C5 / ATCC BAA-1333), this protein is Tetrahydromethanopterin S-methyltransferase subunit B.